The primary structure comprises 237 residues: Nodulation protein NolA (237 aa).

The HTH merR-type domain maps to 10–79 (RWRIGELAGA…LQEIRRAMDG (70 aa)). A DNA-binding region (H-T-H motif) is located at residues 13–32 (IGELAGATGVTVRTLHHYEH).

In terms of biological role, involved in genotype-specific nodulation of soybeans. This chain is Nodulation protein NolA (nolA), found in Bradyrhizobium sp. (strain NC92).